Reading from the N-terminus, the 337-residue chain is RNA 3'-terminal phosphate cyclase (337 aa).

Residues Gln101 and 282–285 (HMSD) contribute to the ATP site. The Tele-AMP-histidine intermediate role is filled by His306.

The protein belongs to the RNA 3'-terminal cyclase family. Type 1 subfamily.

The protein localises to the cytoplasm. It carries out the reaction a 3'-end 3'-phospho-ribonucleotide-RNA + ATP = a 3'-end 2',3'-cyclophospho-ribonucleotide-RNA + AMP + diphosphate. Functionally, catalyzes the conversion of 3'-phosphate to a 2',3'-cyclic phosphodiester at the end of RNA. The mechanism of action of the enzyme occurs in 3 steps: (A) adenylation of the enzyme by ATP; (B) transfer of adenylate to an RNA-N3'P to produce RNA-N3'PP5'A; (C) and attack of the adjacent 2'-hydroxyl on the 3'-phosphorus in the diester linkage to produce the cyclic end product. The biological role of this enzyme is unknown but it is likely to function in some aspects of cellular RNA processing. This chain is RNA 3'-terminal phosphate cyclase, found in Saccharolobus islandicus (strain L.S.2.15 / Lassen #1) (Sulfolobus islandicus).